Reading from the N-terminus, the 433-residue chain is Phosphomethylpyrimidine synthase 1 (433 aa).

Substrate-binding positions include Met95, Tyr124, His163, 185–187 (SRG), 226–229 (NAMR), and Glu265. His269 provides a ligand contact to Zn(2+). Tyr292 contributes to the substrate binding site. His333 provides a ligand contact to Zn(2+). Residues Cys408, Cys411, and Cys415 each coordinate [4Fe-4S] cluster.

The protein belongs to the ThiC family. Requires [4Fe-4S] cluster as cofactor.

The enzyme catalyses 5-amino-1-(5-phospho-beta-D-ribosyl)imidazole + S-adenosyl-L-methionine = 4-amino-2-methyl-5-(phosphooxymethyl)pyrimidine + CO + 5'-deoxyadenosine + formate + L-methionine + 3 H(+). It participates in cofactor biosynthesis; thiamine diphosphate biosynthesis. Its function is as follows. Catalyzes the synthesis of the hydroxymethylpyrimidine phosphate (HMP-P) moiety of thiamine from aminoimidazole ribotide (AIR) in a radical S-adenosyl-L-methionine (SAM)-dependent reaction. In Methanothermobacter thermautotrophicus (strain ATCC 29096 / DSM 1053 / JCM 10044 / NBRC 100330 / Delta H) (Methanobacterium thermoautotrophicum), this protein is Phosphomethylpyrimidine synthase 1.